Here is a 257-residue protein sequence, read N- to C-terminus: uncharacterized protein (257 aa).

The N-terminal stretch at 1 to 22 is a signal peptide; sequence MRYLKRLSWYISILILIVVIAG. Cys23 carries the N-palmitoyl cysteine lipid modification. Cys23 is lipidated: S-diacylglycerol cysteine.

The protein belongs to the staphylococcal tandem lipoprotein family.

The protein resides in the cell membrane. This is an uncharacterized protein from Staphylococcus aureus (strain N315).